The primary structure comprises 688 residues: MIOREX complex component 1 (688 aa).

The disordered stretch occupies residues 1–24 (MGLKITKGQLRTKDLNQSSSKSSQ). A mitochondrion-targeting transit peptide spans 1–46 (MGLKITKGQLRTKDLNQSSSKSSQSSRIGVDTCIFTRMLPRINTAI).

Associates with the mitochondrial ribosome.

It is found in the mitochondrion. Functionally, component of MIOREX complexes, large expressome-like assemblies of ribosomes with factors involved in all the steps of post-transcriptional gene expression. The sequence is that of MIOREX complex component 1 from Saccharomyces cerevisiae (strain ATCC 204508 / S288c) (Baker's yeast).